The primary structure comprises 428 residues: Enolase (428 aa).

Gln163 provides a ligand contact to (2R)-2-phosphoglycerate. The active-site Proton donor is the Glu205. Mg(2+) contacts are provided by Asp242, Glu285, and Asp312. (2R)-2-phosphoglycerate contacts are provided by Lys337, Arg366, Ser367, and Lys388. Lys337 (proton acceptor) is an active-site residue.

Belongs to the enolase family. It depends on Mg(2+) as a cofactor.

It localises to the cytoplasm. The protein localises to the secreted. It is found in the cell surface. The enzyme catalyses (2R)-2-phosphoglycerate = phosphoenolpyruvate + H2O. It participates in carbohydrate degradation; glycolysis; pyruvate from D-glyceraldehyde 3-phosphate: step 4/5. Its function is as follows. Catalyzes the reversible conversion of 2-phosphoglycerate (2-PG) into phosphoenolpyruvate (PEP). It is essential for the degradation of carbohydrates via glycolysis. In Nitrosomonas eutropha (strain DSM 101675 / C91 / Nm57), this protein is Enolase.